Reading from the N-terminus, the 210-residue chain is Thiamine-phosphate synthase (210 aa).

4-amino-2-methyl-5-(diphosphooxymethyl)pyrimidine-binding positions include 39-43 and Asn-71; that span reads QLREK. 2 residues coordinate Mg(2+): Asp-72 and Asp-91. Position 110 (Ser-110) interacts with 4-amino-2-methyl-5-(diphosphooxymethyl)pyrimidine. 134–136 is a 2-[(2R,5Z)-2-carboxy-4-methylthiazol-5(2H)-ylidene]ethyl phosphate binding site; that stretch reads TPT. Position 137 (Lys-137) interacts with 4-amino-2-methyl-5-(diphosphooxymethyl)pyrimidine. Gly-163 is a 2-[(2R,5Z)-2-carboxy-4-methylthiazol-5(2H)-ylidene]ethyl phosphate binding site.

This sequence belongs to the thiamine-phosphate synthase family. Mg(2+) serves as cofactor.

It catalyses the reaction 2-[(2R,5Z)-2-carboxy-4-methylthiazol-5(2H)-ylidene]ethyl phosphate + 4-amino-2-methyl-5-(diphosphooxymethyl)pyrimidine + 2 H(+) = thiamine phosphate + CO2 + diphosphate. The catalysed reaction is 2-(2-carboxy-4-methylthiazol-5-yl)ethyl phosphate + 4-amino-2-methyl-5-(diphosphooxymethyl)pyrimidine + 2 H(+) = thiamine phosphate + CO2 + diphosphate. The enzyme catalyses 4-methyl-5-(2-phosphooxyethyl)-thiazole + 4-amino-2-methyl-5-(diphosphooxymethyl)pyrimidine + H(+) = thiamine phosphate + diphosphate. It participates in cofactor biosynthesis; thiamine diphosphate biosynthesis; thiamine phosphate from 4-amino-2-methyl-5-diphosphomethylpyrimidine and 4-methyl-5-(2-phosphoethyl)-thiazole: step 1/1. In terms of biological role, condenses 4-methyl-5-(beta-hydroxyethyl)thiazole monophosphate (THZ-P) and 2-methyl-4-amino-5-hydroxymethyl pyrimidine pyrophosphate (HMP-PP) to form thiamine monophosphate (TMP). This is Thiamine-phosphate synthase from Campylobacter jejuni subsp. jejuni serotype O:2 (strain ATCC 700819 / NCTC 11168).